The following is a 31-amino-acid chain: Cytolysin Oshem 2 (31 aa).

The protein resides in the secreted. It is found in the nematocyst. The protein localises to the target cell membrane. In terms of biological role, cytolysin that shows weak hemolysis and weak myonecrosis. The chain is Cytolysin Oshem 2 from Olindias sambaquiensis (Hydromedusa).